The sequence spans 408 residues: UPF0754 membrane protein Tery_3973 (408 aa).

A run of 2 helical transmembrane segments spans residues 4 to 24 and 385 to 405; these read IWLYFVPPIAGGIIGYFTNDI and IVNLGGVLGVVVGSFQTILLV.

This sequence belongs to the UPF0754 family.

The protein resides in the cell inner membrane. This chain is UPF0754 membrane protein Tery_3973, found in Trichodesmium erythraeum (strain IMS101).